Here is a 337-residue protein sequence, read N- to C-terminus: Adenine deaminase (337 aa).

Zn(2+) contacts are provided by His-14, His-16, and His-194. Residue Glu-197 is the Proton donor of the active site. Asp-275 provides a ligand contact to Zn(2+). Position 276 (Asp-276) interacts with substrate.

Belongs to the metallo-dependent hydrolases superfamily. Adenosine and AMP deaminases family. Adenine deaminase type 2 subfamily. It depends on Zn(2+) as a cofactor.

It catalyses the reaction adenine + H2O + H(+) = hypoxanthine + NH4(+). Catalyzes the hydrolytic deamination of adenine to hypoxanthine. Plays an important role in the purine salvage pathway and in nitrogen catabolism. This chain is Adenine deaminase, found in Vibrio parahaemolyticus serotype O3:K6 (strain RIMD 2210633).